The chain runs to 261 residues: Putative [LysW]-aminoadipate/[LysW]-glutamate kinase (261 aa).

Substrate contacts are provided by residues 35 to 36 (GG), arginine 62, and asparagine 162.

The protein belongs to the acetylglutamate kinase family. LysZ subfamily.

Its subcellular location is the cytoplasm. It catalyses the reaction [amino-group carrier protein]-C-terminal-N-(1,4-dicarboxybutan-1-yl)-L-glutamine + ATP = [amino-group carrier protein]-C-terminal-N-(1-carboxy-5-phosphooxy-5-oxopentan-1-yl)-L-glutamine + ADP. It carries out the reaction [amino-group carrier protein]-C-terminal-gamma-(L-glutamyl)-L-glutamate + ATP = [amino-group carrier protein]-C-terminal-gamma-(5-phospho-L-glutamyl)-L-glutamate + ADP. Its pathway is amino-acid biosynthesis; L-lysine biosynthesis via AAA pathway; L-lysine from L-alpha-aminoadipate (Thermus route): step 2/5. It functions in the pathway amino-acid biosynthesis; L-arginine biosynthesis. Its function is as follows. Involved in both the arginine and lysine biosynthetic pathways. Phosphorylates the LysW-bound precursors glutamate (for arginine biosynthesis), respectively alpha-aminoadipate (for lysine biosynthesis). This Pyrobaculum calidifontis (strain DSM 21063 / JCM 11548 / VA1) protein is Putative [LysW]-aminoadipate/[LysW]-glutamate kinase.